Consider the following 625-residue polypeptide: 1-deoxy-D-xylulose-5-phosphate synthase (625 aa).

Residues His-80 and Gly-121–Ser-123 contribute to the thiamine diphosphate site. A Mg(2+)-binding site is contributed by Asp-152. Thiamine diphosphate is bound by residues Gly-153–Ala-154, Asn-181, Tyr-290, and Glu-371. Asn-181 is a Mg(2+) binding site.

Belongs to the transketolase family. DXPS subfamily. As to quaternary structure, homodimer. Mg(2+) is required as a cofactor. It depends on thiamine diphosphate as a cofactor.

The catalysed reaction is D-glyceraldehyde 3-phosphate + pyruvate + H(+) = 1-deoxy-D-xylulose 5-phosphate + CO2. It participates in metabolic intermediate biosynthesis; 1-deoxy-D-xylulose 5-phosphate biosynthesis; 1-deoxy-D-xylulose 5-phosphate from D-glyceraldehyde 3-phosphate and pyruvate: step 1/1. In terms of biological role, catalyzes the acyloin condensation reaction between C atoms 2 and 3 of pyruvate and glyceraldehyde 3-phosphate to yield 1-deoxy-D-xylulose-5-phosphate (DXP). The chain is 1-deoxy-D-xylulose-5-phosphate synthase from Haemophilus influenzae (strain ATCC 51907 / DSM 11121 / KW20 / Rd).